The sequence spans 534 residues: Serine/threonine-protein kinase ppk15 (534 aa).

Residues 1–40 (MDSDSPILPLSNNPPAARTHDHSQRNNHARHVSSSGTTLF) are disordered. Phosphoserine occurs at positions 33, 56, and 60. Positions 85 to 104 (FSSEQNPRRPLTKPSEGVHN) are disordered. Residues 130-458 (YLILDTLGHG…PDQAKNHPFI (329 aa)) form the Protein kinase domain. ATP-binding positions include 136–144 (LGHGTFGQV) and K159. The Proton acceptor role is filled by D257. Y291 bears the Phosphotyrosine mark.

This sequence belongs to the protein kinase superfamily. Ser/Thr protein kinase family.

Its subcellular location is the cytoplasm. The protein resides in the cytoskeleton. It localises to the microtubule organizing center. The protein localises to the spindle pole body. The enzyme catalyses L-seryl-[protein] + ATP = O-phospho-L-seryl-[protein] + ADP + H(+). The catalysed reaction is L-threonyl-[protein] + ATP = O-phospho-L-threonyl-[protein] + ADP + H(+). This is Serine/threonine-protein kinase ppk15 (ppk15) from Schizosaccharomyces pombe (strain 972 / ATCC 24843) (Fission yeast).